Consider the following 59-residue polypeptide: QAVRYANGYTYDIETGQVSSPYTGRVYETKGKAPFYGFGFEHPYHYYPGYYHGYPHAFY.

Gln-1 carries the pyrrolidone carboxylic acid modification.

The protein is Cuticle protein 7 isoform a of Limulus polyphemus (Atlantic horseshoe crab).